The following is a 361-amino-acid chain: Peptide chain release factor 1 (361 aa).

Glutamine 235 carries the post-translational modification N5-methylglutamine. The interval serine 284 to arginine 306 is disordered.

The protein belongs to the prokaryotic/mitochondrial release factor family. Post-translationally, methylated by PrmC. Methylation increases the termination efficiency of RF1.

The protein localises to the cytoplasm. Peptide chain release factor 1 directs the termination of translation in response to the peptide chain termination codons UAG and UAA. This chain is Peptide chain release factor 1, found in Xylella fastidiosa (strain 9a5c).